The primary structure comprises 318 residues: Thioredoxin reductase (318 aa).

36-43 (TGLQQGGQ) lines the FAD pocket. Residues Cys136 and Cys139 are joined by a disulfide bond. Residue 286 to 295 (DVMDHNYRQA) participates in FAD binding.

This sequence belongs to the class-II pyridine nucleotide-disulfide oxidoreductase family. In terms of assembly, homodimer. Requires FAD as cofactor.

It is found in the cytoplasm. The enzyme catalyses [thioredoxin]-dithiol + NADP(+) = [thioredoxin]-disulfide + NADPH + H(+). In Haemophilus influenzae (strain ATCC 51907 / DSM 11121 / KW20 / Rd), this protein is Thioredoxin reductase (trxB).